We begin with the raw amino-acid sequence, 115 residues long: MAKKKSTAKRYKMHVKKGDTVQVIAGKDKAKVGEVIDVLPKLSQVVVEGVNMKTKHVKPRSESESGQISTVEFPIHSSNVMLYSNKENVASRVCYTFDDSGRKVRMLKKTGEIID.

It belongs to the universal ribosomal protein uL24 family. As to quaternary structure, part of the 50S ribosomal subunit.

Functionally, one of two assembly initiator proteins, it binds directly to the 5'-end of the 23S rRNA, where it nucleates assembly of the 50S subunit. One of the proteins that surrounds the polypeptide exit tunnel on the outside of the subunit. In Acaryochloris marina (strain MBIC 11017), this protein is Large ribosomal subunit protein uL24.